Consider the following 834-residue polypeptide: Periplasmic nitrate reductase (834 aa).

The segment at residues 1–29 (MNLTRREFAKANAAAIAAAAAGLPILVRA) is a signal peptide (tat-type signal). Positions 41–97 (LVWNKAPCRFCGTGCSVMVATRDGQVVATHGDIKAEVNRGINCVKGYFLSKIMYGSD) constitute a 4Fe-4S Mo/W bis-MGD-type domain. Cysteine 48, cysteine 51, cysteine 55, and cysteine 83 together coordinate [4Fe-4S] cluster. Mo-bis(molybdopterin guanine dinucleotide)-binding positions include lysine 85, glutamine 152, asparagine 177, cysteine 181, 214–221 (WGSNMAEM), 245–249 (STFEH), 264–266 (QTD), methionine 375, glutamine 379, asparagine 485, 511–512 (SD), lysine 534, aspartate 561, and 721–730 (TGRVLEHWHT). Phenylalanine 797 is a binding site for substrate. Residues asparagine 805 and lysine 822 each contribute to the Mo-bis(molybdopterin guanine dinucleotide) site.

The protein belongs to the prokaryotic molybdopterin-containing oxidoreductase family. NasA/NapA/NarB subfamily. Component of the periplasmic nitrate reductase NapAB complex composed of NapA and NapB. The cofactor is [4Fe-4S] cluster. Mo-bis(molybdopterin guanine dinucleotide) is required as a cofactor. In terms of processing, predicted to be exported by the Tat system. The position of the signal peptide cleavage has not been experimentally proven.

The protein resides in the periplasm. It carries out the reaction 2 Fe(II)-[cytochrome] + nitrate + 2 H(+) = 2 Fe(III)-[cytochrome] + nitrite + H2O. In terms of biological role, catalytic subunit of the periplasmic nitrate reductase complex NapAB. Receives electrons from NapB and catalyzes the reduction of nitrate to nitrite. This chain is Periplasmic nitrate reductase, found in Pseudomonas aeruginosa (strain UCBPP-PA14).